Here is a 533-residue protein sequence, read N- to C-terminus: Heterogeneous nuclear ribonucleoprotein Q (533 aa).

Ala-2 is modified (N-acetylalanine). Residue Ser-69 is modified to Phosphoserine. 3 consecutive RRM domains span residues 72–151, 153–235, and 248–318; these read TEIF…ISVA, NRLF…WADP, and KVLF…FAKP. Lys-78 participates in a covalent cross-link: Glycyl lysine isopeptide (Lys-Gly) (interchain with G-Cter in SUMO2). The residue at position 131 (Lys-131) is an N6-acetyllysine. An N6-acetyllysine modification is found at Lys-273. Tyr-283 carries the post-translational modification Phosphotyrosine. The interaction with APOBEC1 stretch occupies residues 310–471; that stretch reads NIEIVFAKPP…GARGGRGGNV (162 aa). An Asymmetric dimethylarginine; by PRMT1; alternate modification is found at Arg-354. The residue at position 354 (Arg-354) is an Omega-N-methylarginine; by PRMT1; alternate. 6 repeat units span residues 358-360, 361-363, 370-374, 379-382, 388-390, and 395-398. Positions 358–469 are 8 X 3 AA repeats of R-G-G; that stretch reads RGGRGGYGYP…VRGARGGRGG (112 aa). Residues 370–398 form a 3 X 4 AA repeats of Y-Y-G-Y region; sequence YYGYEDYYDYYGYDYHNYRGGYEDPYYGY. Position 406 is an omega-N-methylarginine; by PRMT1 (Arg-406). The disordered stretch occupies residues 407 to 533; it reads GRGGRGARGA…YQDTFGQQWK (127 aa). A 1-4 repeat occupies 408–410; sequence RGG. The segment covering 414–432 has biased composition (low complexity); that stretch reads RGAAPSRGRGAAPPRGRAG. Arg-420 is subject to Asymmetric dimethylarginine; by PRMT1. Arg-428 carries the post-translational modification Asymmetric dimethylarginine; by PRMT1; alternate. Arg-428 carries the omega-N-methylarginine; by PRMT1; alternate modification. The segment at 428–459 is interaction with SMN; sequence RGRAGYSQRGGPGSARGVRGARGGAQQQRGRG. Residue Arg-436 is modified to Asymmetric dimethylarginine; alternate. Residue Arg-436 is modified to Omega-N-methylarginine; alternate. The stretch at 436–438 is one 1-5 repeat; sequence RGG. 2 positions are modified to asymmetric dimethylarginine; by PRMT1; alternate: Arg-446 and Arg-449. 2 positions are modified to omega-N-methylarginine; by PRMT1; alternate: Arg-446 and Arg-449. Repeat copies occupy residues 449-451, 464-466, and 467-469. Residues 460-472 show a composition bias toward gly residues; it reads VRGARGGRGGNVG. The Bipartite nuclear localization signal signature appears at 474-488; the sequence is KRKADGYNQPDSKRR. The segment covering 490–505 has biased composition (polar residues); sequence TNNQNWGSQPIAQQPL. Position 497 is a phosphoserine (Ser-497). A Glycyl lysine isopeptide (Lys-Gly) (interchain with G-Cter in SUMO2) cross-link involves residue Lys-517.

Identified in a histone pre-mRNA complex, at least composed of ERI1, LSM11, SLBP, SNRPB, SYNCRIP and YBX1. Identified in the spliceosome C complex. Component of the coding region determinant (CRD)-mediated complex, composed of DHX9, HNRNPU, IGF2BP1, SYNCRIP and YBX1. Identified in a mRNP complex, at least composed of DHX9, DDX3X, ELAVL1, HNRNPU, IGF2BP1, ILF3, PABPC1, PCBP2, PTBP2, STAU1, STAU2, SYNCRIP and YBX1. Identified in a mRNP granule complex, at least composed of ACTB, ACTN4, DHX9, ERG, HNRNPA1, HNRNPA2B1, HNRNPAB, HNRNPD, HNRNPL, HNRNPR, HNRNPU, HSPA1, HSPA8, IGF2BP1, ILF2, ILF3, NCBP1, NCL, PABPC1, PABPC4, PABPN1, RPLP0, RPS3, RPS3A, RPS4X, RPS8, RPS9, SYNCRIP, YBX1 and untranslated mRNAs. Component of the APOB mRNA editosome. Interacts with APOBEC1 and A1CF. Part of a complex associated with the FOS mCRD domain and consisting of PABPC1, PAIP1, CSDE1/UNR, HNRPD and SYNCRIP. Interacts with HNRPR, SMN, POLR2A hyperphosphorylated C-terminal domain, minute virus of mice (MVM) NS1 protein and through its C-terminal domain with SYT7, SYT8 and SYT9. The non-phosphorylated and phosphorylated forms are colocalized with PAIP1 in polysomes. Interacts with GTPBP1. Interacts with HABP4. In terms of processing, phosphorylated on tyrosine. The membrane-bound form found in microsomes is phosphorylated in vitro by insulin receptor tyrosine kinase (INSR). Phosphorylation is inhibited upon binding to RNA, whereas the cytoplasmic form is poorly phosphorylated.

The protein localises to the nucleus. It is found in the nucleoplasm. Its subcellular location is the cytoplasm. It localises to the microsome. Its function is as follows. Heterogenous nuclear ribonucleoprotein (hnRNP) implicated in mRNA processing mechanisms. Component of the CRD-mediated complex that promotes MYC mRNA stability. Is associated in vitro with pre-mRNA, splicing intermediates and mature mRNA protein complexes. Binds to apoB mRNA AU-rich sequences. Part of the APOB mRNA editosome complex and may modulate the postranscriptional C to U RNA-editing of the APOB mRNA through either by binding to A1CF (APOBEC1 complementation factor), to APOBEC1 or to RNA itself. May be involved in translationally coupled mRNA turnover. Implicated with other RNA-binding proteins in the cytoplasmic deadenylation/translational and decay interplay of the FOS mRNA mediated by the major coding-region determinant of instability (mCRD) domain. Interacts in vitro preferentially with poly(A) and poly(U) RNA sequences. May be involved in cytoplasmic vesicle-based mRNA transport through interaction with synaptotagmins. This Rattus norvegicus (Rat) protein is Heterogeneous nuclear ribonucleoprotein Q (Syncrip).